Here is a 352-residue protein sequence, read N- to C-terminus: Gap junction alpha-4 protein (352 aa).

Topologically, residues Gly-2–Lys-23 are cytoplasmic. The chain crosses the membrane as a helical span at residues Ile-24–Gly-46. Residues Asp-47–Arg-76 are Extracellular-facing. A helical membrane pass occupies residues Tyr-77–Leu-99. Topologically, residues Ser-100–Thr-153 are cytoplasmic. Residues Tyr-154–Tyr-176 traverse the membrane as a helical segment. Residues Gly-177–Phe-208 are Extracellular-facing. Residues Ile-209 to Val-231 traverse the membrane as a helical segment. Topologically, residues Cys-232–Val-352 are cytoplasmic. The segment at Lys-330–Val-352 is disordered. The segment covering Thr-340–Val-352 has biased composition (polar residues).

It belongs to the connexin family. Alpha-type (group II) subfamily. A connexon is composed of a hexamer of connexins.

It localises to the cell membrane. Its subcellular location is the cell junction. It is found in the gap junction. In terms of biological role, one gap junction consists of a cluster of closely packed pairs of transmembrane channels, the connexons, through which materials of low MW diffuse from one cell to a neighboring cell. The polypeptide is Gap junction alpha-4 protein (gja4) (Xenopus tropicalis (Western clawed frog)).